The following is a 274-amino-acid chain: Probable starch degradation products transport system permease protein AmyC (274 aa).

6 consecutive transmembrane segments (helical) span residues 11–31, 73–93, 103–123, 139–159, 184–204, and 238–258; these read LTFL…IILV, LIIT…TAYA, VIIY…VMIP, LVFM…YGAL, IILP…IMWI, and WNLG…FYFL. Residues 69-259 enclose the ABC transmembrane type-1 domain; that stretch reads FSNTLIITVF…LPVVIFYFLA (191 aa).

This sequence belongs to the binding-protein-dependent transport system permease family. MalFG subfamily.

The protein localises to the cell membrane. Functionally, probably part of a binding-protein-dependent transport system starch degradation products. Probably responsible for the translocation of the substrate across the membrane. This is Probable starch degradation products transport system permease protein AmyC (amyC) from Thermoanaerobacterium thermosulfurigenes (Clostridium thermosulfurogenes).